We begin with the raw amino-acid sequence, 159 residues long: Trafficking protein particle complex subunit 6A (159 aa).

S33 carries the post-translational modification Phosphoserine.

Belongs to the TRAPP small subunits family. BET3 subfamily. In terms of assembly, part of the multisubunit transport protein particle (TRAPP) complex. Heterodimer with TRAPPC3. The heterodimer TRAPPC3-TRAPPC6A interacts with TRAPPC2L. Interacts with TRAPPC2L.

It localises to the golgi apparatus. Its subcellular location is the cis-Golgi network. The protein resides in the endoplasmic reticulum. May play a role in vesicular transport during the biogenesis of melanosomes. In Homo sapiens (Human), this protein is Trafficking protein particle complex subunit 6A.